The following is a 907-amino-acid chain: Coatomer subunit beta'-1 (907 aa).

9 WD repeats span residues 13 to 52, 55 to 94, 97 to 136, 140 to 180, 183 to 224, 227 to 266, 269 to 309, 351 to 389, and 461 to 501; these read QRSE…MVKS, VSEL…KVKV, AHTD…MCTQ, GHSH…PNFT, GHQK…CVQT, GHTH…LENT, YGLE…ASMD, SCDL…NRSF, and RIDV…SYLE. 2 stretches are compositionally biased toward acidic residues: residues 850–866 and 874–887; these read ETED…EEVL and STDE…DEPE. Positions 850–887 are disordered; that stretch reads ETEDALDENGEPDEEVLEENKVEESTDEAVEVDADEPE.

The protein belongs to the WD repeat COPB2 family. In terms of assembly, oligomeric complex that consists of at least the alpha, beta, beta', gamma, delta, epsilon and zeta subunits.

It localises to the cytoplasm. Its subcellular location is the golgi apparatus membrane. The protein localises to the cytoplasmic vesicle. The protein resides in the COPI-coated vesicle membrane. The coatomer is a cytosolic protein complex that binds to dilysine motifs and reversibly associates with Golgi non-clathrin-coated vesicles, which further mediate biosynthetic protein transport from the ER, via the Golgi up to the trans Golgi network. Coatomer complex is required for budding from Golgi membranes, and is essential for the retrograde Golgi-to-ER transport of dilysine-tagged proteins. This Oryza sativa subsp. japonica (Rice) protein is Coatomer subunit beta'-1.